The chain runs to 995 residues: Integrator complex subunit 8 (995 aa).

At Thr-18 the chain carries Phosphothreonine. The short motif at 24–29 is the WFEF motif element; the sequence is WFEFLL. 4 TPR repeats span residues 250 to 288, 320 to 356, 570 to 603, and 833 to 866; these read CQVC…LAEI, SQQL…TLPV, VYIL…VTEF, and HAWL…CSDF.

This sequence belongs to the Integrator subunit 8 family. In terms of assembly, component of the Integrator complex, composed of core subunits INTS1, INTS2, INTS3, INTS4, INTS5, INTS6, INTS7, INTS8, INTS9/RC74, INTS10, INTS11/CPSF3L, INTS12, INTS13, INTS14 and INTS15. The core complex associates with protein phosphatase 2A subunits PPP2CA and PPP2R1A, to form the Integrator-PP2A (INTAC) complex.

It is found in the nucleus. The protein localises to the chromosome. Functionally, component of the integrator complex, a multiprotein complex that terminates RNA polymerase II (Pol II) transcription in the promoter-proximal region of genes. The integrator complex provides a quality checkpoint during transcription elongation by driving premature transcription termination of transcripts that are unfavorably configured for transcriptional elongation: the complex terminates transcription by (1) catalyzing dephosphorylation of the C-terminal domain (CTD) of Pol II subunit POLR2A/RPB1 and SUPT5H/SPT5, (2) degrading the exiting nascent RNA transcript via endonuclease activity and (3) promoting the release of Pol II from bound DNA. The integrator complex is also involved in terminating the synthesis of non-coding Pol II transcripts, such as enhancer RNAs (eRNAs), small nuclear RNAs (snRNAs), telomerase RNAs and long non-coding RNAs (lncRNAs). Within the integrator complex, INTS8 is required for the recruitment of protein phosphatase 2A (PP2A) to transcription pause-release checkpoint. The chain is Integrator complex subunit 8 (Ints8) from Mus musculus (Mouse).